A 205-amino-acid polypeptide reads, in one-letter code: Transcription antitermination protein NusB (205 aa).

The protein belongs to the NusB family.

Functionally, involved in transcription antitermination. Required for transcription of ribosomal RNA (rRNA) genes. Binds specifically to the boxA antiterminator sequence of the ribosomal RNA (rrn) operons. This is Transcription antitermination protein NusB from Acaryochloris marina (strain MBIC 11017).